The chain runs to 769 residues: Phosphatidylinositol 4-phosphate 5-kinase 8 (769 aa).

8 MORN repeats span residues 16–38, 39–61, 62–84, 85–107, 108–130, 131–153, 154–176, and 177–198; these read YSGQLKGTLPHGKGKYAWPDGII, YEGDWEEGKISGRGKLMWSSGAK, YEGDFSGGYLHGFGTLTSPDGSV, YAGAWRMNVRHGLGRKEYCNSDV, YDGSWREGLQDGSGSYSWYNGNR, FIGNWKKGKMSGRGVMSWANGDL, FNGFWLNGLRHGSGVYKYADGGF, and YFGTWSRGLKDGSGVFYPAGSK. The tract at residues 266–289 is disordered; sequence PPRDFMHHGPSSKSARSVDSGQSE. The span at 276-288 shows a compositional bias: polar residues; it reads SSKSARSVDSGQS. A PIPK domain is found at 344–765; that stretch reads WNHYLMLNLQ…RFIDFLLKVF (422 aa). The segment at 725–746 is activation loop; that stretch reads YNMKKKVEHTCKSMKYDPMTIS.

The enzyme catalyses a 1,2-diacyl-sn-glycero-3-phospho-(1D-myo-inositol 4-phosphate) + ATP = a 1,2-diacyl-sn-glycero-3-phospho-(1D-myo-inositol-4,5-bisphosphate) + ADP + H(+). The polypeptide is Phosphatidylinositol 4-phosphate 5-kinase 8 (PIP5K8) (Arabidopsis thaliana (Mouse-ear cress)).